The following is a 160-amino-acid chain: 2-C-methyl-D-erythritol 2,4-cyclodiphosphate synthase (160 aa).

A divalent metal cation-binding residues include Asp-8 and His-10. 4-CDP-2-C-methyl-D-erythritol 2-phosphate contacts are provided by residues Asp-8–His-10 and His-34–Ser-35. His-42 contributes to the a divalent metal cation binding site. 4-CDP-2-C-methyl-D-erythritol 2-phosphate-binding positions include Asp-56 to Gly-58, Phe-61 to Asp-65, Ala-100 to Leu-106, Thr-132 to Glu-135, Phe-139, and Arg-142.

The protein belongs to the IspF family. In terms of assembly, homotrimer. A divalent metal cation serves as cofactor.

The enzyme catalyses 4-CDP-2-C-methyl-D-erythritol 2-phosphate = 2-C-methyl-D-erythritol 2,4-cyclic diphosphate + CMP. Its pathway is isoprenoid biosynthesis; isopentenyl diphosphate biosynthesis via DXP pathway; isopentenyl diphosphate from 1-deoxy-D-xylulose 5-phosphate: step 4/6. Involved in the biosynthesis of isopentenyl diphosphate (IPP) and dimethylallyl diphosphate (DMAPP), two major building blocks of isoprenoid compounds. Catalyzes the conversion of 4-diphosphocytidyl-2-C-methyl-D-erythritol 2-phosphate (CDP-ME2P) to 2-C-methyl-D-erythritol 2,4-cyclodiphosphate (ME-CPP) with a corresponding release of cytidine 5-monophosphate (CMP). The chain is 2-C-methyl-D-erythritol 2,4-cyclodiphosphate synthase from Proteus mirabilis (strain HI4320).